The chain runs to 366 residues: Quinolinate synthase (366 aa).

Iminosuccinate contacts are provided by His-44 and Ser-61. Position 108 (Cys-108) interacts with [4Fe-4S] cluster. Residues 139 to 141 and Ser-160 each bind iminosuccinate; that span reads YIN. Cys-228 contributes to the [4Fe-4S] cluster binding site. Iminosuccinate-binding positions include 254–256 and Thr-271; that span reads HPE. Position 318 (Cys-318) interacts with [4Fe-4S] cluster.

This sequence belongs to the quinolinate synthase family. Type 3 subfamily. [4Fe-4S] cluster is required as a cofactor.

The protein localises to the cytoplasm. It carries out the reaction iminosuccinate + dihydroxyacetone phosphate = quinolinate + phosphate + 2 H2O + H(+). It functions in the pathway cofactor biosynthesis; NAD(+) biosynthesis; quinolinate from iminoaspartate: step 1/1. In terms of biological role, catalyzes the condensation of iminoaspartate with dihydroxyacetone phosphate to form quinolinate. This is Quinolinate synthase from Listeria innocua serovar 6a (strain ATCC BAA-680 / CLIP 11262).